The sequence spans 527 residues: Peptide chain release factor 3 (527 aa).

Positions 9–278 (NKRRTFAIIS…GLTQWAPKPQ (270 aa)) constitute a tr-type G domain. GTP-binding positions include 18-25 (SHPDAGKT), 86-90 (DTPGH), and 140-143 (NKLD).

This sequence belongs to the TRAFAC class translation factor GTPase superfamily. Classic translation factor GTPase family. PrfC subfamily.

It localises to the cytoplasm. Functionally, increases the formation of ribosomal termination complexes and stimulates activities of RF-1 and RF-2. It binds guanine nucleotides and has strong preference for UGA stop codons. It may interact directly with the ribosome. The stimulation of RF-1 and RF-2 is significantly reduced by GTP and GDP, but not by GMP. This Haemophilus influenzae (strain PittEE) protein is Peptide chain release factor 3.